The chain runs to 292 residues: Cyclin-dependent kinase 5 (292 aa).

The 283-residue stretch at 4–286 folds into the Protein kinase domain; sequence YEKLEKIGEG…AEEALQHPYF (283 aa). ATP contacts are provided by residues 10–18 and lysine 33; that span reads IGEGTYGTV. Tyrosine 15 is subject to Phosphotyrosine; by ABL1, EPHA4 and FYN. Position 17 is a phosphothreonine (threonine 17). An N6-acetyllysine modification is found at lysine 56. The residue at position 72 (serine 72) is a Phosphoserine. The active-site Proton acceptor is aspartate 126. Position 159 is a phosphoserine (serine 159).

This sequence belongs to the protein kinase superfamily. CMGC Ser/Thr protein kinase family. CDC2/CDKX subfamily. Heterodimer composed of a catalytic subunit CDK5 and a regulatory subunit CDK5R1 (p25) and macromolecular complex composed of at least CDK5, CDK5R1 (p35) and CDK5RAP1 or CDK5RAP2 or CDK5RAP3. Only the heterodimer shows kinase activity. Under neurotoxic stress and neuronal injury conditions, p35 is cleaved by calpain to generate p25 that hyperactivates CDK5, that becomes functionally disabled and often toxic. Found in a trimolecular complex with CABLES1 and ABL1. Interacts with CABLES1 and CABLES2. Interacts with AATK and GSTP1. Binds to HDAC1 when in complex with p25. Interaction with myristoylation p35 promotes CDK5 association with membranes. Both isoforms 1 and 2 interacts with beta-catenin/CTNNB1. Interacts with delta-catenin/CTNND2 and APEX1. Interacts with P53/TP53 in neurons. Interacts with EPHA4; may mediate the activation of NGEF by EPHA4. Interacts with PTK2/FAK1. The complex p35/CDK5 interacts with CLOCK. Interacts with HTR6. Phosphorylation on Tyr-15 by ABL1 and FYN, and on Ser-159 by casein kinase 1 promotes kinase activity. By contrast, phosphorylation at Thr-14 inhibits activity. In terms of processing, phosphorylation at Ser-159 is essential for maximal catalytic activity. In terms of tissue distribution, ubiquitously expressed. Accumulates in cortical neurons (at protein level). As to expression, expressed in the testis, skeletal muscle, colon, bone marrow and ovary.

It localises to the cytoplasm. It is found in the nucleus. The protein localises to the cell membrane. Its subcellular location is the perikaryon. The protein resides in the cell projection. It localises to the lamellipodium. It is found in the growth cone. The protein localises to the postsynaptic density. Its subcellular location is the synapse. It carries out the reaction L-seryl-[protein] + ATP = O-phospho-L-seryl-[protein] + ADP + H(+). The catalysed reaction is L-threonyl-[protein] + ATP = O-phospho-L-threonyl-[protein] + ADP + H(+). Inhibited by 2-(1-ethyl-2-hydroxyethylamino)-6-benzylamino-9-isopropylpurine (roscovitine), 1-isopropyl-4-aminobenzyl-6-ether-linked benzimidazoles, resveratrol, AT-7519 and olomoucine. Activated by CDK5R1 (p35) and CDK5R2 (p39) during the development of the nervous system; degradation of CDK5R1 (p35) and CDK5R2 (p39) by proteasome result in down regulation of kinase activity, during this process, CDK5 phosphorylates p35 and induces its ubiquitination and subsequent degradation. Kinase activity is mainly determined by the amount of p35 available and subcellular location; reversible association to plasma membrane inhibits activity. Long-term inactivation as well as CDK5R1 (p25)-mediated hyperactivation of CDK5 triggers cell death. The pro-death activity of hyperactivated CDK5 is suppressed by membrane association of CDK5, via myristoylation of p35. Brain-derived neurotrophic factor, glial-derived neurotrophic factor, nerve growth factor (NGF), retinoic acid, laminin and neuregulin promote activity. Neurotoxicity enhances nuclear activity, thus leading to MEF2 phosphorylation and inhibition prior to apoptosis of cortical neurons. Repression by GSTP1 via p25/p35 translocation prevents neurodegeneration. In terms of biological role, proline-directed serine/threonine-protein kinase essential for neuronal cell cycle arrest and differentiation and may be involved in apoptotic cell death in neuronal diseases by triggering abortive cell cycle re-entry. Interacts with D1 and D3-type G1 cyclins. Phosphorylates SRC, NOS3, VIM/vimentin, p35/CDK5R1, MEF2A, SIPA1L1, SH3GLB1, PXN, PAK1, MCAM/MUC18, SEPT5, SYN1, DNM1, AMPH, SYNJ1, CDK16, RAC1, RHOA, CDC42, TONEBP/NFAT5, MAPT/TAU, MAP1B, histone H1, p53/TP53, HDAC1, APEX1, PTK2/FAK1, huntingtin/HTT, ATM, MAP2, NEFH and NEFM. Regulates several neuronal development and physiological processes including neuronal survival, migration and differentiation, axonal and neurite growth, synaptogenesis, oligodendrocyte differentiation, synaptic plasticity and neurotransmission, by phosphorylating key proteins. Negatively regulates the CACNA1B/CAV2.2 -mediated Ca(2+) release probability at hippocampal neuronal soma and synaptic terminals. Activated by interaction with CDK5R1 (p35) and CDK5R2 (p39), especially in postmitotic neurons, and promotes CDK5R1 (p35) expression in an autostimulation loop. Phosphorylates many downstream substrates such as Rho and Ras family small GTPases (e.g. PAK1, RAC1, RHOA, CDC42) or microtubule-binding proteins (e.g. MAPT/TAU, MAP2, MAP1B), and modulates actin dynamics to regulate neurite growth and/or spine morphogenesis. Also phosphorylates exocytosis associated proteins such as MCAM/MUC18, SEPT5, SYN1, and CDK16/PCTAIRE1 as well as endocytosis associated proteins such as DNM1, AMPH and SYNJ1 at synaptic terminals. In the mature central nervous system (CNS), regulates neurotransmitter movements by phosphorylating substrates associated with neurotransmitter release and synapse plasticity; synaptic vesicle exocytosis, vesicles fusion with the presynaptic membrane, and endocytosis. Promotes cell survival by activating anti-apoptotic proteins BCL2 and STAT3, and negatively regulating of JNK3/MAPK10 activity. Phosphorylation of p53/TP53 in response to genotoxic and oxidative stresses enhances its stabilization by preventing ubiquitin ligase-mediated proteasomal degradation, and induces transactivation of p53/TP53 target genes, thus regulating apoptosis. Phosphorylation of p35/CDK5R1 enhances its stabilization by preventing calpain-mediated proteolysis producing p25/CDK5R1 and avoiding ubiquitin ligase-mediated proteasomal degradation. During aberrant cell-cycle activity and DNA damage, p25/CDK5 activity elicits cell-cycle activity and double-strand DNA breaks that precedes neuronal death by deregulating HDAC1. DNA damage triggered phosphorylation of huntingtin/HTT in nuclei of neurons protects neurons against polyglutamine expansion as well as DNA damage mediated toxicity. Phosphorylation of PXN reduces its interaction with PTK2/FAK1 in matrix-cell focal adhesions (MCFA) during oligodendrocytes (OLs) differentiation. Negative regulator of Wnt/beta-catenin signaling pathway. Activator of the GAIT (IFN-gamma-activated inhibitor of translation) pathway, which suppresses expression of a post-transcriptional regulon of proinflammatory genes in myeloid cells; phosphorylates the linker domain of glutamyl-prolyl tRNA synthetase (EPRS) in a IFN-gamma-dependent manner, the initial event in assembly of the GAIT complex. Phosphorylation of SH3GLB1 is required for autophagy induction in starved neurons. Phosphorylation of TONEBP/NFAT5 in response to osmotic stress mediates its rapid nuclear localization. MEF2 is inactivated by phosphorylation in nucleus in response to neurotoxin, thus leading to neuronal apoptosis. APEX1 AP-endodeoxyribonuclease is repressed by phosphorylation, resulting in accumulation of DNA damage and contributing to neuronal death. NOS3 phosphorylation down regulates NOS3-derived nitrite (NO) levels. SRC phosphorylation mediates its ubiquitin-dependent degradation and thus leads to cytoskeletal reorganization. May regulate endothelial cell migration and angiogenesis via the modulation of lamellipodia formation. Involved in dendritic spine morphogenesis by mediating the EFNA1-EPHA4 signaling. The complex p35/CDK5 participates in the regulation of the circadian clock by modulating the function of CLOCK protein: phosphorylates CLOCK at 'Thr-451' and 'Thr-461' and regulates the transcriptional activity of the CLOCK-BMAL1 heterodimer in association with altered stability and subcellular distribution. The chain is Cyclin-dependent kinase 5 from Homo sapiens (Human).